The sequence spans 177 residues: Endoribonuclease YbeY (177 aa).

Positions 118, 122, and 128 each coordinate Zn(2+).

Belongs to the endoribonuclease YbeY family. It depends on Zn(2+) as a cofactor.

The protein resides in the cytoplasm. Single strand-specific metallo-endoribonuclease involved in late-stage 70S ribosome quality control and in maturation of the 3' terminus of the 16S rRNA. This chain is Endoribonuclease YbeY, found in Mycobacterium bovis (strain ATCC BAA-935 / AF2122/97).